A 422-amino-acid chain; its full sequence is Phospho-N-acetylmuramoyl-pentapeptide-transferase (422 aa).

A run of 9 helical transmembrane segments spans residues 28-48, 71-91, 95-115, 136-156, 211-231, 239-259, 279-299, 313-333, and 399-419; these read LMAV…FINL, VGVP…PCLL, LDNI…SLGF, IIGQ…SPDV, AGWF…SNGA, GMAA…AYVS, LVIY…YNAY, IGGI…IPIL, and KITV…IITL.

This sequence belongs to the glycosyltransferase 4 family. MraY subfamily. The cofactor is Mg(2+).

Its subcellular location is the cell inner membrane. The enzyme catalyses UDP-N-acetyl-alpha-D-muramoyl-L-alanyl-gamma-D-glutamyl-meso-2,6-diaminopimeloyl-D-alanyl-D-alanine + di-trans,octa-cis-undecaprenyl phosphate = di-trans,octa-cis-undecaprenyl diphospho-N-acetyl-alpha-D-muramoyl-L-alanyl-D-glutamyl-meso-2,6-diaminopimeloyl-D-alanyl-D-alanine + UMP. Its pathway is cell wall biogenesis; peptidoglycan biosynthesis. In terms of biological role, catalyzes the initial step of the lipid cycle reactions in the biosynthesis of the cell wall peptidoglycan: transfers peptidoglycan precursor phospho-MurNAc-pentapeptide from UDP-MurNAc-pentapeptide onto the lipid carrier undecaprenyl phosphate, yielding undecaprenyl-pyrophosphoryl-MurNAc-pentapeptide, known as lipid I. The protein is Phospho-N-acetylmuramoyl-pentapeptide-transferase of Bacteroides thetaiotaomicron (strain ATCC 29148 / DSM 2079 / JCM 5827 / CCUG 10774 / NCTC 10582 / VPI-5482 / E50).